Consider the following 458-residue polypeptide: ATP synthase subunit beta (458 aa).

148-155 (GGAGVGKT) provides a ligand contact to ATP.

It belongs to the ATPase alpha/beta chains family. In terms of assembly, F-type ATPases have 2 components, CF(1) - the catalytic core - and CF(0) - the membrane proton channel. CF(1) has five subunits: alpha(3), beta(3), gamma(1), delta(1), epsilon(1). CF(0) has three main subunits: a(1), b(2) and c(9-12). The alpha and beta chains form an alternating ring which encloses part of the gamma chain. CF(1) is attached to CF(0) by a central stalk formed by the gamma and epsilon chains, while a peripheral stalk is formed by the delta and b chains.

Its subcellular location is the cell inner membrane. It carries out the reaction ATP + H2O + 4 H(+)(in) = ADP + phosphate + 5 H(+)(out). Produces ATP from ADP in the presence of a proton gradient across the membrane. The catalytic sites are hosted primarily by the beta subunits. The protein is ATP synthase subunit beta of Laribacter hongkongensis (strain HLHK9).